We begin with the raw amino-acid sequence, 467 residues long: Dimethylamine methyltransferase MtbB3 (467 aa).

Pyl-356 is a non-standard amino acid (pyrrolysine).

This sequence belongs to the dimethylamine methyltransferase family.

The enzyme catalyses Co(I)-[dimethylamine-specific corrinoid protein] + dimethylamine + H(+) = methyl-Co(III)-[dimethylamine-specific corrinoid protein] + methylamine. It participates in one-carbon metabolism; methanogenesis from dimethylamine. In terms of biological role, catalyzes the transfer of a methyl group from dimethylamine to the corrinoid cofactor of MtbC. This is Dimethylamine methyltransferase MtbB3 (mtbB3) from Methanosarcina mazei (strain ATCC BAA-159 / DSM 3647 / Goe1 / Go1 / JCM 11833 / OCM 88) (Methanosarcina frisia).